Consider the following 420-residue polypeptide: 3-isopropylmalate dehydratase large subunit (420 aa).

Residues C300, C360, and C363 each coordinate [4Fe-4S] cluster.

This sequence belongs to the aconitase/IPM isomerase family. LeuC type 2 subfamily. As to quaternary structure, heterodimer of LeuC and LeuD. [4Fe-4S] cluster is required as a cofactor.

It carries out the reaction (2R,3S)-3-isopropylmalate = (2S)-2-isopropylmalate. Its pathway is amino-acid biosynthesis; L-leucine biosynthesis; L-leucine from 3-methyl-2-oxobutanoate: step 2/4. In terms of biological role, catalyzes the isomerization between 2-isopropylmalate and 3-isopropylmalate, via the formation of 2-isopropylmaleate. The polypeptide is 3-isopropylmalate dehydratase large subunit (Syntrophus aciditrophicus (strain SB)).